The sequence spans 195 residues: Imidazoleglycerol-phosphate dehydratase (195 aa).

This sequence belongs to the imidazoleglycerol-phosphate dehydratase family.

It localises to the cytoplasm. The catalysed reaction is D-erythro-1-(imidazol-4-yl)glycerol 3-phosphate = 3-(imidazol-4-yl)-2-oxopropyl phosphate + H2O. It participates in amino-acid biosynthesis; L-histidine biosynthesis; L-histidine from 5-phospho-alpha-D-ribose 1-diphosphate: step 6/9. The sequence is that of Imidazoleglycerol-phosphate dehydratase from Exiguobacterium sp. (strain ATCC BAA-1283 / AT1b).